Here is a 360-residue protein sequence, read N- to C-terminus: Chorismate synthase (360 aa).

2 residues coordinate NADP(+): Arg-48 and Arg-54. Residues 125 to 127 (RSS), 246 to 247 (NA), Gly-286, 301 to 305 (KPTSS), and Arg-327 each bind FMN.

This sequence belongs to the chorismate synthase family. Homotetramer. FMNH2 serves as cofactor.

It catalyses the reaction 5-O-(1-carboxyvinyl)-3-phosphoshikimate = chorismate + phosphate. Its pathway is metabolic intermediate biosynthesis; chorismate biosynthesis; chorismate from D-erythrose 4-phosphate and phosphoenolpyruvate: step 7/7. In terms of biological role, catalyzes the anti-1,4-elimination of the C-3 phosphate and the C-6 proR hydrogen from 5-enolpyruvylshikimate-3-phosphate (EPSP) to yield chorismate, which is the branch point compound that serves as the starting substrate for the three terminal pathways of aromatic amino acid biosynthesis. This reaction introduces a second double bond into the aromatic ring system. This is Chorismate synthase from Glaesserella parasuis serovar 5 (strain SH0165) (Haemophilus parasuis).